A 233-amino-acid polypeptide reads, in one-letter code: Large ribosomal subunit protein uL1 (233 aa).

This sequence belongs to the universal ribosomal protein uL1 family. In terms of assembly, part of the 50S ribosomal subunit.

Functionally, binds directly to 23S rRNA. The L1 stalk is quite mobile in the ribosome, and is involved in E site tRNA release. Protein L1 is also a translational repressor protein, it controls the translation of the L11 operon by binding to its mRNA. This chain is Large ribosomal subunit protein uL1, found in Geobacillus kaustophilus (strain HTA426).